Consider the following 192-residue polypeptide: Probable metallophosphoesterase MJ0623 (192 aa).

The a divalent metal cation site is built by D41, H43, D70, N92, H115, H144, and H146.

It belongs to the metallophosphoesterase superfamily. YfcE family. It depends on a divalent metal cation as a cofactor.

This chain is Probable metallophosphoesterase MJ0623, found in Methanocaldococcus jannaschii (strain ATCC 43067 / DSM 2661 / JAL-1 / JCM 10045 / NBRC 100440) (Methanococcus jannaschii).